Reading from the N-terminus, the 472-residue chain is Serine/threonine-protein kinase ULK3 (472 aa).

The region spanning 14-270 is the Protein kinase domain; it reads FILTERLGSG…FQDFFAHPWV (257 aa). ATP contacts are provided by residues 20 to 28 and Lys-44; that span reads LGSGTYATV. The active-site Proton acceptor is Asp-137. Ser-176 is subject to Phosphoserine. The MIT 1 domain maps to 281 to 347; the sequence is LAQATALVVE…VSRAEELKAI (67 aa). A phosphoserine; by autocatalysis mark is found at Ser-350 and Ser-384. The MIT 2 domain occupies 376–444; the sequence is LLAALEVASA…ARAEYLKEQI (69 aa). Ser-464 is subject to Phosphoserine.

This sequence belongs to the protein kinase superfamily. Ser/Thr protein kinase family. APG1/unc-51/ULK1 subfamily. Interacts (via protein kinase domain) with SUFU. Post-translationally, autophosphorylated. Autophosphorylation is blocked by interaction with SUFU.

It localises to the cytoplasm. The enzyme catalyses L-seryl-[protein] + ATP = O-phospho-L-seryl-[protein] + ADP + H(+). It catalyses the reaction L-threonyl-[protein] + ATP = O-phospho-L-threonyl-[protein] + ADP + H(+). Functionally, serine/threonine protein kinase that acts as a regulator of Sonic hedgehog (SHH) signaling and autophagy. Acts as a negative regulator of SHH signaling in the absence of SHH ligand: interacts with SUFU, thereby inactivating the protein kinase activity and preventing phosphorylation of GLI proteins (GLI1, GLI2 and/or GLI3). Positively regulates SHH signaling in the presence of SHH: dissociates from SUFU, autophosphorylates and mediates phosphorylation of GLI2, activating it and promoting its nuclear translocation. Phosphorylates in vitro GLI2, as well as GLI1 and GLI3, although less efficiently. Also acts as a regulator of autophagy: following cellular senescence, able to induce autophagy. This chain is Serine/threonine-protein kinase ULK3 (Ulk3), found in Rattus norvegicus (Rat).